The following is an 89-amino-acid chain: Small ribosomal subunit protein uS15 (89 aa).

It belongs to the universal ribosomal protein uS15 family. Part of the 30S ribosomal subunit. Forms a bridge to the 50S subunit in the 70S ribosome, contacting the 23S rRNA.

Functionally, one of the primary rRNA binding proteins, it binds directly to 16S rRNA where it helps nucleate assembly of the platform of the 30S subunit by binding and bridging several RNA helices of the 16S rRNA. Forms an intersubunit bridge (bridge B4) with the 23S rRNA of the 50S subunit in the ribosome. This chain is Small ribosomal subunit protein uS15, found in Heliobacterium modesticaldum (strain ATCC 51547 / Ice1).